The following is a 303-amino-acid chain: Indole-3-glycerol phosphate synthase (303 aa).

Belongs to the TrpC family.

The enzyme catalyses 1-(2-carboxyphenylamino)-1-deoxy-D-ribulose 5-phosphate + H(+) = (1S,2R)-1-C-(indol-3-yl)glycerol 3-phosphate + CO2 + H2O. It participates in amino-acid biosynthesis; L-tryptophan biosynthesis; L-tryptophan from chorismate: step 4/5. This is Indole-3-glycerol phosphate synthase from Acaryochloris marina (strain MBIC 11017).